Reading from the N-terminus, the 210-residue chain is Thymidylate kinase (210 aa).

10–17 is a binding site for ATP; the sequence is GPEGAGKS.

The protein belongs to the thymidylate kinase family.

It carries out the reaction dTMP + ATP = dTDP + ADP. Its function is as follows. Phosphorylation of dTMP to form dTDP in both de novo and salvage pathways of dTTP synthesis. In Pseudomonas fluorescens (strain Pf0-1), this protein is Thymidylate kinase.